The chain runs to 102 residues: MFAIIETGGKQIKVEEGQEIFVEKLDVNEGDSFTFDKVLFVGGDSVKVGAPTVEGATVTATVNKQGRGKKITVFTYKRRKDSKRKKGHRQPYTKLTIDKIKA.

Belongs to the bacterial ribosomal protein bL21 family. Part of the 50S ribosomal subunit. Contacts protein L20.

In terms of biological role, this protein binds to 23S rRNA in the presence of protein L20. In Staphylococcus haemolyticus (strain JCSC1435), this protein is Large ribosomal subunit protein bL21.